Consider the following 447-residue polypeptide: UPF0210 protein LBUL_0934 (447 aa).

Belongs to the UPF0210 family. As to quaternary structure, homodimer.

In Lactobacillus delbrueckii subsp. bulgaricus (strain ATCC BAA-365 / Lb-18), this protein is UPF0210 protein LBUL_0934.